Here is a 572-residue protein sequence, read N- to C-terminus: Putative carbohydrate transport ATP-binding protein MPN_258 (572 aa).

ABC transporter domains lie at 6 to 253 (FRME…MGKE) and 327 to 572 (RFIR…LIMQ). 40-47 (GENGAGKS) is an ATP binding site.

Belongs to the ABC transporter superfamily.

The protein localises to the cell membrane. Its function is as follows. Part of the ABC transporter complex involved in carbohydrates import. Probably responsible for energy coupling to the transport system. In Mycoplasma pneumoniae (strain ATCC 29342 / M129 / Subtype 1) (Mycoplasmoides pneumoniae), this protein is Putative carbohydrate transport ATP-binding protein MPN_258.